A 294-amino-acid polypeptide reads, in one-letter code: Major pollen allergen Pha a 5.3 (294 aa).

The first 25 residues, 1–25 (MAVQKYTVALFLAMALVAGPAASYA), serve as a signal peptide directing secretion.

This sequence belongs to the Poa p IX/Phl p VI allergen family.

This chain is Major pollen allergen Pha a 5.3, found in Phalaris aquatica (Canary grass).